We begin with the raw amino-acid sequence, 86 residues long: Conotoxin Ec15a (86 aa).

Positions 1 to 23 (MEKLTILILVATVLLAIQVLGQG) are cleaved as a signal peptide. A propeptide spanning residues 24-49 (EGEKPPKEWVQQYAAKRLWALMKGPR) is cleaved from the precursor. Gln50 carries the pyrrolidone carboxylic acid modification.

This sequence belongs to the conotoxin O2 superfamily. Contains 4 disulfide bonds. In terms of tissue distribution, expressed by the venom duct.

It is found in the secreted. This is Conotoxin Ec15a from Conus emaciatus (False virgin cone).